The sequence spans 1155 residues: DNA-directed RNA polymerase subunit beta (1155 aa).

This sequence belongs to the RNA polymerase beta chain family. In terms of assembly, the RNAP catalytic core consists of 2 alpha, 1 beta, 1 beta' and 1 omega subunit. When a sigma factor is associated with the core the holoenzyme is formed, which can initiate transcription.

The catalysed reaction is RNA(n) + a ribonucleoside 5'-triphosphate = RNA(n+1) + diphosphate. In terms of biological role, DNA-dependent RNA polymerase catalyzes the transcription of DNA into RNA using the four ribonucleoside triphosphates as substrates. In Borrelia garinii subsp. bavariensis (strain ATCC BAA-2496 / DSM 23469 / PBi) (Borreliella bavariensis), this protein is DNA-directed RNA polymerase subunit beta.